A 1544-amino-acid chain; its full sequence is Rho guanine nucleotide exchange factor 12 (1544 aa).

Residues 1 to 62 are disordered; it reads MSGTQSTITD…KTKSSSEESR (62 aa). An N-acetylserine modification is found at S2. Basic and acidic residues predominate over residues 28-45; the sequence is SPTDKKQKVERIASHDFD. S41 is modified (phosphoserine). In terms of domain architecture, PDZ spans 72–151; sequence CVIIQKDDNG…LTVQGRPPGS (80 aa). Positions 194 to 262 form a coiled coil; that stretch reads MGEENNVVHN…LSKATGSAQD (69 aa). The disordered stretch occupies residues 247-346; it reads PQLQEQLSKA…SLVGSPSTRI (100 aa). Polar residues-rich tracts occupy residues 249–260 and 293–309; these read LQEQLSKATGSA and DCSS…NADS. S309 bears the Phosphoserine mark. Residues 313–329 show a composition bias toward basic and acidic residues; sequence GPKERIYLEENPEKSET. The segment covering 330-344 has biased composition (polar residues); it reads IQDTDTQSLVGSPST. S341 carries the phosphoserine modification. The region spanning 367–558 is the RGSL domain; that stretch reads GQCSCFQSIE…LMYMKHLGVK (192 aa). The segment at 570 to 706 is disordered; sequence GRIGFLPKIK…GDTLDGTPRT (137 aa). Residues 582–592 show a composition bias toward basic and acidic residues; that stretch reads MKKDKEGEEKG. The segment covering 631-640 has biased composition (polar residues); sequence STPSSVSPEP. S637 bears the Phosphoserine mark. Low complexity predominate over residues 663 to 676; that stretch reads ANSMSSVASGASFS. T736 is subject to Phosphothreonine. A DH domain is found at 787-977; it reads KRQEVINELF…RQILNYVNQA (191 aa). Positions 1019–1132 constitute a PH domain; that stretch reads KMIHEGPLVW…WQDLICRMAA (114 aa). Over residues 1138 to 1149 the composition is skewed to polar residues; that stretch reads STKPIPLPQSTP. The segment at 1138 to 1179 is disordered; the sequence is STKPIPLPQSTPGEGDNDEEDPSKLKEEQHGISVTGLQSPDR. S1288, S1327, S1377, S1457, and S1541 each carry phosphoserine.

In terms of assembly, interacts with GNA12 and GNA13, probably through the RGS-like domain. Interacts with RHOA, PLXNB1 and PLXNB2. Interacts through its PDZ domain with IGF1R beta subunit. Interacts with GCSAM. Found in a complex with ARHGEF11 and ARHGEF12; binding to ARHGEF11 and ARHGEF12 enhances CDC42 GEF activity of PLEKHG4B, and PLEKHG4B, in turn, inhibits ARHGEF11- and ARHGEF12-mediated RHOA activation. Ubiquitously expressed. Isoform 2 is found in jejunum and testis.

Its subcellular location is the cytoplasm. It localises to the membrane. In terms of biological role, may play a role in the regulation of RhoA GTPase by guanine nucleotide-binding alpha-12 (GNA12) and alpha-13 (GNA13). Acts as guanine nucleotide exchange factor (GEF) for RhoA GTPase and may act as GTPase-activating protein (GAP) for GNA12 and GNA13. The sequence is that of Rho guanine nucleotide exchange factor 12 (ARHGEF12) from Homo sapiens (Human).